The following is a 726-amino-acid chain: Methionine--tRNA ligase (726 aa).

A 'HIGH' region motif is present at residues Pro12–Asn22. Zn(2+)-binding residues include Cys143, Cys146, Cys155, and Cys158. Residues Lys330–Ser334 carry the 'KMSKS' region motif. An ATP-binding site is contributed by Lys333. The 106-residue stretch at Phe562–Ile667 folds into the tRNA-binding domain.

This sequence belongs to the class-I aminoacyl-tRNA synthetase family. MetG type 1 subfamily. In terms of assembly, homodimer. Zn(2+) is required as a cofactor.

The protein localises to the cytoplasm. It carries out the reaction tRNA(Met) + L-methionine + ATP = L-methionyl-tRNA(Met) + AMP + diphosphate. In terms of biological role, is required not only for elongation of protein synthesis but also for the initiation of all mRNA translation through initiator tRNA(fMet) aminoacylation. This chain is Methionine--tRNA ligase, found in Borrelia turicatae (strain 91E135).